Reading from the N-terminus, the 194-residue chain is Thioredoxin O1, mitochondrial (194 aa).

Residues 1–42 constitute a mitochondrion transit peptide; it reads MKGNWSIVRKVLHRQFSTLRSSTPSSRLSTSIRPLVLAPNSI. Residue Ser75 is modified to Phosphoserine. Residues 89–194 enclose the Thioredoxin domain; the sequence is VKSEEEFINA…LKNLMEQLYK (106 aa). Catalysis depends on nucleophile residues Cys118 and Cys121. Cysteines 118 and 121 form a disulfide.

Belongs to the thioredoxin family. Plant O-type subfamily.

The protein resides in the mitochondrion matrix. Thiol-disulfide oxidoreductase that may participate in various redox reactions. Possesses insulin disulfide bonds reducing activity. Reduced by thioredoxin reductases NTRA and NTRB. The protein is Thioredoxin O1, mitochondrial of Arabidopsis thaliana (Mouse-ear cress).